We begin with the raw amino-acid sequence, 1373 residues long: DNA-directed RNA polymerase subunit beta (1373 aa).

The protein belongs to the RNA polymerase beta chain family. As to quaternary structure, the RNAP catalytic core consists of 2 alpha, 1 beta, 1 beta' and 1 omega subunit. When a sigma factor is associated with the core the holoenzyme is formed, which can initiate transcription.

It catalyses the reaction RNA(n) + a ribonucleoside 5'-triphosphate = RNA(n+1) + diphosphate. In terms of biological role, DNA-dependent RNA polymerase catalyzes the transcription of DNA into RNA using the four ribonucleoside triphosphates as substrates. The chain is DNA-directed RNA polymerase subunit beta from Rickettsia massiliae (strain Mtu5).